A 385-amino-acid chain; its full sequence is Homoserine O-succinyltransferase (385 aa).

In terms of domain architecture, AB hydrolase-1 spans 51 to 359 (NAILICHALS…EATEGHDAFL (309 aa)). The Nucleophile role is filled by Ser157. Residue Arg227 coordinates substrate. Catalysis depends on residues Asp322 and His355. A substrate-binding site is contributed by Asp356.

This sequence belongs to the AB hydrolase superfamily. MetX family. In terms of assembly, homodimer.

The protein resides in the cytoplasm. It catalyses the reaction L-homoserine + succinyl-CoA = O-succinyl-L-homoserine + CoA. It participates in amino-acid biosynthesis; L-methionine biosynthesis via de novo pathway; O-succinyl-L-homoserine from L-homoserine: step 1/1. Functionally, transfers a succinyl group from succinyl-CoA to L-homoserine, forming succinyl-L-homoserine. The protein is Homoserine O-succinyltransferase of Marinomonas sp. (strain MWYL1).